A 110-amino-acid chain; its full sequence is CHH-like protein (110 aa).

The first 23 residues, M1–A23, serve as a signal peptide directing secretion. Residues L24–R35 constitute a propeptide that is removed on maturation. Cystine bridges form between C42–C78, C58–C74, and C61–C87. The residue at position 107 (V107) is a Valine amide.

This sequence belongs to the arthropod CHH/MIH/GIH/VIH hormone family.

Its subcellular location is the secreted. In Bombyx mori (Silk moth), this protein is CHH-like protein (CHHL).